The chain runs to 357 residues: 3-dehydroquinate synthase (357 aa).

NAD(+) contacts are provided by residues 69–74 (DGEKNK), 103–107 (GVIGD), 127–128 (TT), lysine 140, and lysine 149. Glutamate 182, histidine 245, and histidine 262 together coordinate Zn(2+).

Belongs to the sugar phosphate cyclases superfamily. Dehydroquinate synthase family. Requires Co(2+) as cofactor. The cofactor is Zn(2+). It depends on NAD(+) as a cofactor.

It is found in the cytoplasm. The catalysed reaction is 7-phospho-2-dehydro-3-deoxy-D-arabino-heptonate = 3-dehydroquinate + phosphate. Its pathway is metabolic intermediate biosynthesis; chorismate biosynthesis; chorismate from D-erythrose 4-phosphate and phosphoenolpyruvate: step 2/7. Functionally, catalyzes the conversion of 3-deoxy-D-arabino-heptulosonate 7-phosphate (DAHP) to dehydroquinate (DHQ). This chain is 3-dehydroquinate synthase, found in Shewanella denitrificans (strain OS217 / ATCC BAA-1090 / DSM 15013).